We begin with the raw amino-acid sequence, 234 residues long: Phosphoribosylformylglycinamidine synthase subunit PurQ (234 aa).

The 229-residue stretch at 3–231 folds into the Glutamine amidotransferase type-1 domain; sequence AAVVVFPGSN…ALYLERRKDH (229 aa). Cys-87 (nucleophile) is an active-site residue. Active-site residues include His-200 and Glu-202.

Part of the FGAM synthase complex composed of 1 PurL, 1 PurQ and 2 PurS subunits.

It localises to the cytoplasm. The catalysed reaction is N(2)-formyl-N(1)-(5-phospho-beta-D-ribosyl)glycinamide + L-glutamine + ATP + H2O = 2-formamido-N(1)-(5-O-phospho-beta-D-ribosyl)acetamidine + L-glutamate + ADP + phosphate + H(+). The enzyme catalyses L-glutamine + H2O = L-glutamate + NH4(+). Its pathway is purine metabolism; IMP biosynthesis via de novo pathway; 5-amino-1-(5-phospho-D-ribosyl)imidazole from N(2)-formyl-N(1)-(5-phospho-D-ribosyl)glycinamide: step 1/2. Its function is as follows. Part of the phosphoribosylformylglycinamidine synthase complex involved in the purines biosynthetic pathway. Catalyzes the ATP-dependent conversion of formylglycinamide ribonucleotide (FGAR) and glutamine to yield formylglycinamidine ribonucleotide (FGAM) and glutamate. The FGAM synthase complex is composed of three subunits. PurQ produces an ammonia molecule by converting glutamine to glutamate. PurL transfers the ammonia molecule to FGAR to form FGAM in an ATP-dependent manner. PurS interacts with PurQ and PurL and is thought to assist in the transfer of the ammonia molecule from PurQ to PurL. The polypeptide is Phosphoribosylformylglycinamidine synthase subunit PurQ (Pseudothermotoga lettingae (strain ATCC BAA-301 / DSM 14385 / NBRC 107922 / TMO) (Thermotoga lettingae)).